The primary structure comprises 90 residues: DNA-directed RNA polymerase subunit omega (90 aa).

It belongs to the RNA polymerase subunit omega family. The RNAP catalytic core consists of 2 alpha, 1 beta, 1 beta' and 1 omega subunit. When a sigma factor is associated with the core the holoenzyme is formed, which can initiate transcription.

It carries out the reaction RNA(n) + a ribonucleoside 5'-triphosphate = RNA(n+1) + diphosphate. Promotes RNA polymerase assembly. Latches the N- and C-terminal regions of the beta' subunit thereby facilitating its interaction with the beta and alpha subunits. The chain is DNA-directed RNA polymerase subunit omega from Streptomyces griseus subsp. griseus (strain JCM 4626 / CBS 651.72 / NBRC 13350 / KCC S-0626 / ISP 5235).